Here is a 63-residue protein sequence, read N- to C-terminus: MSRICEICGKGPSFGNNVSHANNKTSKIWRPNLQKIKAVKNGTVRSIKVCTRCIRSGHVTKAL.

The protein belongs to the bacterial ribosomal protein bL28 family.

The protein is Large ribosomal subunit protein bL28 of Citrifermentans bemidjiense (strain ATCC BAA-1014 / DSM 16622 / JCM 12645 / Bem) (Geobacter bemidjiensis).